The primary structure comprises 199 residues: Superoxide dismutase [Cu-Zn] (199 aa).

The first 22 residues, 1 to 22, serve as a signal peptide directing secretion; the sequence is MKLTKVALFSLGLFGFSSMALA. The Cu cation site is built by His-92, His-94, and His-117. An intrachain disulfide couples Cys-99 to Cys-195. Zn(2+) is bound by residues His-117, His-126, His-135, and Asp-138. His-173 provides a ligand contact to Cu cation.

It belongs to the Cu-Zn superoxide dismutase family. In terms of assembly, homodimer. Cu cation serves as cofactor. Requires Zn(2+) as cofactor.

It is found in the periplasm. It carries out the reaction 2 superoxide + 2 H(+) = H2O2 + O2. Functionally, destroys radicals which are normally produced within the cells and which are toxic to biological systems. May play a role in the interactive biology of organisms with their hosts and so contribute to their capacity to cause disease. This chain is Superoxide dismutase [Cu-Zn] (sodC), found in Haemophilus ducreyi (strain 35000HP / ATCC 700724).